The chain runs to 189 residues: GMP synthase [glutamine-hydrolyzing] subunit A (189 aa).

One can recognise a Glutamine amidotransferase type-1 domain in the interval 5–189 (KILVVNNYGQ…TNFLEICEKY (185 aa)). C79 functions as the Nucleophile in the catalytic mechanism. Residues H166 and E168 contribute to the active site.

Heterodimer composed of a glutamine amidotransferase subunit (A) and a GMP-binding subunit (B).

The enzyme catalyses XMP + L-glutamine + ATP + H2O = GMP + L-glutamate + AMP + diphosphate + 2 H(+). Its pathway is purine metabolism; GMP biosynthesis; GMP from XMP (L-Gln route): step 1/1. Its function is as follows. Catalyzes the synthesis of GMP from XMP. In Methanosarcina barkeri (strain Fusaro / DSM 804), this protein is GMP synthase [glutamine-hydrolyzing] subunit A.